We begin with the raw amino-acid sequence, 121 residues long: uncharacterized protein (121 aa).

Positions 9-77 (KPIYLQIADQ…RGQGTFIAEK (69 aa)) constitute an HTH gntR-type domain. Residues 37–56 (VREMAIQTKVNPNTIQRTYS) constitute a DNA-binding region (H-T-H motif).

This is an uncharacterized protein from Bacillus subtilis (strain 168).